We begin with the raw amino-acid sequence, 514 residues long: ATP synthase subunit alpha (514 aa).

Residue 170–177 participates in ATP binding; that stretch reads GDRQIGKT.

It belongs to the ATPase alpha/beta chains family. As to quaternary structure, F-type ATPases have 2 components, CF(1) - the catalytic core - and CF(0) - the membrane proton channel. CF(1) has five subunits: alpha(3), beta(3), gamma(1), delta(1), epsilon(1). CF(0) has three main subunits: a(1), b(2) and c(9-12). The alpha and beta chains form an alternating ring which encloses part of the gamma chain. CF(1) is attached to CF(0) by a central stalk formed by the gamma and epsilon chains, while a peripheral stalk is formed by the delta and b chains.

The protein resides in the cell inner membrane. The catalysed reaction is ATP + H2O + 4 H(+)(in) = ADP + phosphate + 5 H(+)(out). Functionally, produces ATP from ADP in the presence of a proton gradient across the membrane. The alpha chain is a regulatory subunit. This chain is ATP synthase subunit alpha, found in Pseudomonas savastanoi pv. phaseolicola (strain 1448A / Race 6) (Pseudomonas syringae pv. phaseolicola (strain 1448A / Race 6)).